The primary structure comprises 262 residues: Protein BcsX (262 aa).

The protein operates within glycan metabolism; bacterial cellulose biosynthesis. The protein is Protein BcsX (bcsX) of Komagataeibacter xylinus (Gluconacetobacter xylinus).